We begin with the raw amino-acid sequence, 275 residues long: Large ribosomal subunit protein uL2 (275 aa).

The segment at 224 to 275 (AMNPVDHPHGGGEAKAGQGNPHPVTPWGVPTKGYKTRKNKRTQQFIVRDRRG) is disordered.

Belongs to the universal ribosomal protein uL2 family. In terms of assembly, part of the 50S ribosomal subunit. Forms a bridge to the 30S subunit in the 70S ribosome.

One of the primary rRNA binding proteins. Required for association of the 30S and 50S subunits to form the 70S ribosome, for tRNA binding and peptide bond formation. It has been suggested to have peptidyltransferase activity; this is somewhat controversial. Makes several contacts with the 16S rRNA in the 70S ribosome. The chain is Large ribosomal subunit protein uL2 from Xanthomonas axonopodis pv. citri (strain 306).